Consider the following 594-residue polypeptide: UvrABC system protein C (594 aa).

Residues 17–94 enclose the GIY-YIG domain; the sequence is LEPGCYLMKD…IKQYQPRYNI (78 aa). The UVR domain maps to 199 to 234; it reads KTILHHLEDRMNKASEQLDFEQAKEYRDMIQHIHNL.

It belongs to the UvrC family. Interacts with UvrB in an incision complex.

The protein localises to the cytoplasm. Its function is as follows. The UvrABC repair system catalyzes the recognition and processing of DNA lesions. UvrC both incises the 5' and 3' sides of the lesion. The N-terminal half is responsible for the 3' incision and the C-terminal half is responsible for the 5' incision. In Staphylococcus epidermidis (strain ATCC 12228 / FDA PCI 1200), this protein is UvrABC system protein C.